The chain runs to 100 residues: Urease subunit gamma (100 aa).

Belongs to the urease gamma subunit family. In terms of assembly, heterotrimer of UreA (gamma), UreB (beta) and UreC (alpha) subunits. Three heterotrimers associate to form the active enzyme.

The protein resides in the cytoplasm. It catalyses the reaction urea + 2 H2O + H(+) = hydrogencarbonate + 2 NH4(+). It participates in nitrogen metabolism; urea degradation; CO(2) and NH(3) from urea (urease route): step 1/1. The chain is Urease subunit gamma from Rhizobium etli (strain CIAT 652).